Here is a 345-residue protein sequence, read N- to C-terminus: L-erythro-3,5-diaminohexanoate dehydrogenase (345 aa).

It belongs to the KDD family. Homodimer.

It carries out the reaction (3S,5S)-3,5-diaminohexanoate + NAD(+) + H2O = (5S)-5-amino-3-oxohexanoate + NH4(+) + NADH + H(+). It participates in amino-acid degradation; L-lysine degradation via acetate pathway. Involved in the anaerobic fermentation of lysine. Catalyzes the oxidative deamination of L-erythro-3,5-diaminohexanoate (3,5-DAH) to 3-keto-5-aminohexanoate (KAH). It can use NAD or NADP. The polypeptide is L-erythro-3,5-diaminohexanoate dehydrogenase (Fusobacterium nucleatum subsp. nucleatum (strain ATCC 25586 / DSM 15643 / BCRC 10681 / CIP 101130 / JCM 8532 / KCTC 2640 / LMG 13131 / VPI 4355)).